We begin with the raw amino-acid sequence, 482 residues long: MVYNQDLSISNKTCGISDWLPPVRNKKISDIKSNSWFDIRRCLNPNIKTKFVPVNNKQIVLKEPNCIYLKYDLITLNPSSDHIRILREWFSLYAKIYNYAINLIRKMFYVNNKLIKSRLQCEIYDEIIIRKLSNDKTKLIESLKLSDRPPEFLLDYAISHACTYCNSQVKKYLKDSKNPYNKKTLRFRLWSLHKSRRVMHILPPKLCDKNVCNGLFLKLNPSKNIHDIYMFCVMSWDRLTGKFFVYKPVLKRLINIPKKQFTRCGIDPGVRTFLTLYSSERTYDVCDSTFYNNKIKRMWRKIDRINFLLHNRKKRKKRKNDRRLRKSLAKYYRKIRQRIKDLHTKTAKYLVSRYKEIYIGIYDTSKNLSDPRISFYEKRRIATLNHELFLTKLQQVADRFGSSVFAINEHMTTKTCSKCGRINEIGSSKVHKCACGMYAGRDENAAKNILKKGIKEHYLSAQSDKNVTEYNNKKSNNTNKET.

Residues cysteine 416, cysteine 419, cysteine 433, and cysteine 435 each coordinate Zn(2+).

This sequence in the central section; belongs to the transposase 2 family. In the C-terminal section; belongs to the transposase 35 family.

The polypeptide is Putative transposase R186 (Acanthamoeba polyphaga (Amoeba)).